Consider the following 426-residue polypeptide: Trigger factor 1 (426 aa).

A PPIase FKBP-type domain is found at 163–248; it reads QDTVNIDFAG…VNKLKRKEYA (86 aa).

This sequence belongs to the FKBP-type PPIase family. Tig subfamily.

The protein localises to the cytoplasm. It carries out the reaction [protein]-peptidylproline (omega=180) = [protein]-peptidylproline (omega=0). In terms of biological role, involved in protein export. Acts as a chaperone by maintaining the newly synthesized protein in an open conformation. Functions as a peptidyl-prolyl cis-trans isomerase. The sequence is that of Trigger factor 1 from Desulfitobacterium hafniense (strain Y51).